Consider the following 758-residue polypeptide: Vitamin K-dependent gamma-carboxylase (758 aa).

The disordered stretch occupies residues 1-31 (MAVSARSARSPPDSDKVQKDKAGQTSGRRQG). N-acetylalanine is present on alanine 2. Over 2 to 60 (AVSARSARSPPDSDKVQKDKAGQTSGRRQGSRMGKLLGFEWTDVSSWGKLVTLLNRPTD) the chain is Cytoplasmic. Residues 12–22 (PDSDKVQKDKA) show a composition bias toward basic and acidic residues. A helical transmembrane segment spans residues 61 to 81 (PASLAVFRFLFGLMMVLDIPQ). Residues 82–113 (ERGLSSLDRRYLDGLEVCRFPLLDALQPLPLD) lie on the Lumenal side of the membrane. Cysteine 99 and cysteine 450 are disulfide-bonded. The chain crosses the membrane as a helical span at residues 114–134 (WMYLVYTIMFLGALGMMLGLR). Residues 135–136 (YR) lie on the Cytoplasmic side of the membrane. The helical transmembrane segment at 137-157 (ISCVLFLLPYWYVFLLDKTSW) threads the bilayer. Over 158–292 (NNHSYLYGLL…VSYFHCMNSQ (135 aa)) the chain is Lumenal. Residues 293–313 (LFSIGMFPYVMLASSPLFCSP) traverse the membrane as a helical segment. At 314-361 (EWPRKLVAHCPKRLQELLPLRTAPQPSASCVYKRSRAKGGQKPGLRHR) the chain is on the cytoplasmic side. The helical transmembrane segment at 362–382 (LGAAFTLLYLLEQLFLPYSHF) threads the bilayer. Topologically, residues 383-758 (LTQGYNNWTN…PNADAVHSEF (376 aa)) are lumenal. The segment at 727–758 (PFEPVGEPSPSNTDSSNPNPSEPNADAVHSEF) is disordered. The segment covering 734 to 750 (PSPSNTDSSNPNPSEPN) has biased composition (low complexity).

Belongs to the vitamin K-dependent gamma-carboxylase family. In terms of assembly, monomer. May interact with CALU.

Its subcellular location is the endoplasmic reticulum membrane. The enzyme catalyses 4-carboxy-L-glutamyl-[protein] + 2,3-epoxyphylloquinone + H2O + H(+) = phylloquinol + L-glutamyl-[protein] + CO2 + O2. Its function is as follows. Mediates the vitamin K-dependent carboxylation of glutamate residues to calcium-binding gamma-carboxyglutamate (Gla) residues with the concomitant conversion of the reduced hydroquinone form of vitamin K to vitamin K epoxide. Catalyzes gamma-carboxylation of various proteins, such as blood coagulation factors (F2, F7, F9 and F10), osteocalcin (BGLAP) or matrix Gla protein (MGP). The chain is Vitamin K-dependent gamma-carboxylase (GGCX) from Delphinapterus leucas (Beluga whale).